Here is a 583-residue protein sequence, read N- to C-terminus: Complement factor I (583 aa).

An N-terminal signal peptide occupies residues 1–18 (MKLLHVFLLFLCFHLRFC). Intrachain disulfides connect C33–C255, C43–C54, C48–C59, C61–C93, C67–C86, C75–C106, C141–C181, C154–C214, C186–C196, C229–C247, C241–C256, C259–C271, C266–C284, C278–C293, C327–C453, C365–C381, and C373–C444. A Kazal-like domain is found at 55–108 (IEGTCVCKLPYQCPKNGTAVCATNRRSFPTYCQQKSLECLHPGTKFLNNGTCTA). N70 carries N-linked (GlcNAc...) asparagine glycosylation. N-linked (GlcNAc...) (complex) asparagine glycosylation is present at N103. Positions 114 to 212 (VSLKHGNTDS…TMGYQDFADV (99 aa)) constitute an SRCR domain. N177 carries an N-linked (GlcNAc...) asparagine glycan. 2 LDL-receptor class A domains span residues 213–257 (VCYT…LCCK) and 258–294 (ACQGKGFHCKSGVCIPSQYQCNGEVDCITGEDEVGCA). The Ca(2+) site is built by K239, D242, I244, D246, D252, and E253. Residues Y276, N279, E281, D283, D289, and E290 each coordinate Ca(2+). Positions 340-574 (IVGGKRAQLG…YFDWISYHVG (235 aa)) constitute a Peptidase S1 domain. Active-site charge relay system residues include H380 and D429. N-linked (GlcNAc...) asparagine glycans are attached at residues N464 and N494. Disulfide bonds link C467/C531, C495/C510, and C521/C550. The active-site Charge relay system is the S525. N536 carries N-linked (GlcNAc...) asparagine glycosylation.

This sequence belongs to the peptidase S1 family. In terms of assembly, heterodimer of a light and heavy chains; disulfide-linked. The fully processed and mature protein circulates as a zymogen, and is allosterically activated by substrate-induced remodeling of the active site. Interacts with C3b. Interacts with complement factor H. (Microbial infection) Interacts with Staphylococcus aureus clumping factor A/ClfA; this interaction enhances cleavage of C3b into iC3b by CFI. In terms of tissue distribution, expressed in the liver by hepatocytes. Also present in other cells such as monocytes, fibroblasts or keratinocytes.

It localises to the secreted. Its subcellular location is the extracellular space. The enzyme catalyses Inactivates complement subcomponents C3b, iC3b and C4b by proteolytic cleavage.. Trypsin-like serine protease that plays an essential role in regulating the immune response by controlling all complement pathways. Inhibits these pathways by cleaving three peptide bonds in the alpha-chain of C3b and two bonds in the alpha-chain of C4b thereby inactivating these proteins. Essential cofactors for these reactions include factor H and C4BP in the fluid phase and membrane cofactor protein/CD46 and CR1 on cell surfaces. The presence of these cofactors on healthy cells allows degradation of deposited C3b by CFI in order to prevent undesired complement activation, while in apoptotic cells or microbes, the absence of such cofactors leads to C3b-mediated complement activation and subsequent opsonization. The sequence is that of Complement factor I (CFI) from Homo sapiens (Human).